We begin with the raw amino-acid sequence, 257 residues long: Aspartate/glutamate leucyltransferase (257 aa).

Belongs to the R-transferase family. Bpt subfamily.

Its subcellular location is the cytoplasm. It catalyses the reaction N-terminal L-glutamyl-[protein] + L-leucyl-tRNA(Leu) = N-terminal L-leucyl-L-glutamyl-[protein] + tRNA(Leu) + H(+). It carries out the reaction N-terminal L-aspartyl-[protein] + L-leucyl-tRNA(Leu) = N-terminal L-leucyl-L-aspartyl-[protein] + tRNA(Leu) + H(+). Its function is as follows. Functions in the N-end rule pathway of protein degradation where it conjugates Leu from its aminoacyl-tRNA to the N-termini of proteins containing an N-terminal aspartate or glutamate. The chain is Aspartate/glutamate leucyltransferase from Sphingopyxis alaskensis (strain DSM 13593 / LMG 18877 / RB2256) (Sphingomonas alaskensis).